The primary structure comprises 123 residues: Fluoride-specific ion channel FluC 2 (123 aa).

The next 3 helical transmembrane spans lie at phenylalanine 30–glycine 50, valine 68–leucine 88, and tryptophan 93–valine 113. Na(+) is bound by residues glycine 72 and threonine 75.

Belongs to the fluoride channel Fluc/FEX (TC 1.A.43) family.

The protein localises to the cell membrane. The catalysed reaction is fluoride(in) = fluoride(out). Its activity is regulated as follows. Na(+) is not transported, but it plays an essential structural role and its presence is essential for fluoride channel function. Its function is as follows. Fluoride-specific ion channel. Important for reducing fluoride concentration in the cell, thus reducing its toxicity. The polypeptide is Fluoride-specific ion channel FluC 2 (Symbiobacterium thermophilum (strain DSM 24528 / JCM 14929 / IAM 14863 / T)).